Consider the following 484-residue polypeptide: uncharacterized protein (484 aa).

The next 12 membrane-spanning stretches (helical) occupy residues 19 to 39, 78 to 98, 111 to 131, 134 to 154, 165 to 185, 199 to 219, 249 to 269, 289 to 309, 321 to 341, 360 to 380, 398 to 418, and 440 to 460; these read LSFG…MIFV, VNWG…WLIV, FFML…FIIL, IFAI…SNYL, FSPF…AGII, IVFL…IILG, TWYW…PFTF, ISVF…TIGL, ISTI…VFVL, LFLF…GVML, FGLI…ITSL, and LGAY…LALL.

It localises to the cell membrane. This is an uncharacterized protein from Mesomycoplasma hyopneumoniae (strain 232) (Mycoplasma hyopneumoniae).